Consider the following 448-residue polypeptide: tRNA methyltransferase 10 homolog C (448 aa).

Residues 1–48 (MAFVNTLLRTIRCSAVHTLVQEGRSLSLLKASHQLTQSRKIMLSNHVR) constitute a mitochondrion transit peptide. Residues 137-165 (REVMKTNRKEKKKELKESKSKIESLDQLE) are a coiled coil. The interval 144-167 (RKEKKKELKESKSKIESLDQLETK) is disordered. The SAM-dependent MTase TRM10-type domain occupies 190 to 382 (QRWKCVQAMK…SFVPNRKHDG (193 aa)). Residues 429 to 448 (ERTDDTSIRSTRKRWWEEEN) form a disordered region.

It belongs to the class IV-like SAM-binding methyltransferase superfamily. TRM10 family. In terms of assembly, component of mitochondrial ribonuclease P. Interacts with HSD17B10/MRPP2.

Its subcellular location is the mitochondrion matrix. It is found in the mitochondrion nucleoid. It catalyses the reaction adenosine(9) in tRNA + S-adenosyl-L-methionine = N(1)-methyladenosine(9) in tRNA + S-adenosyl-L-homocysteine + H(+). The enzyme catalyses guanosine(9) in tRNA + S-adenosyl-L-methionine = N(1)-methylguanosine(9) in tRNA + S-adenosyl-L-homocysteine + H(+). It carries out the reaction an adenosine in mRNA + S-adenosyl-L-methionine = an N(1)-methyladenosine in mRNA + S-adenosyl-L-homocysteine + H(+). Functionally, mitochondrial tRNA N(1)-methyltransferase involved in mitochondrial tRNA maturation. Component of mitochondrial ribonuclease P, which cleaves tRNA molecules in their 5'-ends. Together with hsd17b10/mrpp2, forms a subcomplex of the mitochondrial ribonuclease P, named MRPP1-MRPP2 subcomplex, which displays functions that are independent of the ribonuclease P activity. The MRPP1-MRPP2 subcomplex catalyzes the formation of N(1)-methylguanine and N(1)-methyladenine at position 9 (m1G9 and m1A9, respectively) in tRNAs; trmt10c/mrpp1 acting as the catalytic N(1)-methyltransferase subunit. The MRPP1-MRPP2 subcomplex also acts as a tRNA maturation platform: following 5'-end cleavage by the mitochondrial ribonuclease P complex, the MRPP1-MRPP2 subcomplex enhances the efficiency of 3'-processing catalyzed by ELAC2, retains the tRNA product after elac2 processing and presents the nascent tRNA to the mitochondrial CCA tRNA nucleotidyltransferase TRNT1 enzyme. In addition to tRNA N(1)-methyltransferase activity, trmt10c/mrpp1 also acts as a mRNA N(1)-methyltransferase by mediating methylation of adenosine residues at the N(1) position of MT-ND5 mRNA. This chain is tRNA methyltransferase 10 homolog C, found in Xenopus tropicalis (Western clawed frog).